Here is a 185-residue protein sequence, read N- to C-terminus: Protein GrpE (185 aa).

The tract at residues 1-22 is disordered; it reads MTASQEPVDQAPESNEPAPAVP.

This sequence belongs to the GrpE family. As to quaternary structure, homodimer.

It localises to the cytoplasm. Functionally, participates actively in the response to hyperosmotic and heat shock by preventing the aggregation of stress-denatured proteins, in association with DnaK and GrpE. It is the nucleotide exchange factor for DnaK and may function as a thermosensor. Unfolded proteins bind initially to DnaJ; upon interaction with the DnaJ-bound protein, DnaK hydrolyzes its bound ATP, resulting in the formation of a stable complex. GrpE releases ADP from DnaK; ATP binding to DnaK triggers the release of the substrate protein, thus completing the reaction cycle. Several rounds of ATP-dependent interactions between DnaJ, DnaK and GrpE are required for fully efficient folding. In Bordetella petrii (strain ATCC BAA-461 / DSM 12804 / CCUG 43448), this protein is Protein GrpE.